A 237-amino-acid polypeptide reads, in one-letter code: Phosphoribosylaminoimidazole-succinocarboxamide synthase (237 aa).

The protein belongs to the SAICAR synthetase family.

It catalyses the reaction 5-amino-1-(5-phospho-D-ribosyl)imidazole-4-carboxylate + L-aspartate + ATP = (2S)-2-[5-amino-1-(5-phospho-beta-D-ribosyl)imidazole-4-carboxamido]succinate + ADP + phosphate + 2 H(+). It functions in the pathway purine metabolism; IMP biosynthesis via de novo pathway; 5-amino-1-(5-phospho-D-ribosyl)imidazole-4-carboxamide from 5-amino-1-(5-phospho-D-ribosyl)imidazole-4-carboxylate: step 1/2. The polypeptide is Phosphoribosylaminoimidazole-succinocarboxamide synthase (Psychrobacter cryohalolentis (strain ATCC BAA-1226 / DSM 17306 / VKM B-2378 / K5)).